The sequence spans 294 residues: Protoheme IX farnesyltransferase (294 aa).

9 helical membrane passes run 24 to 44 (VVLL…PGWV), 48 to 68 (LIAF…AINH), 96 to 116 (ALWF…LFVN), 118 to 138 (LTAL…TGYL), 146 to 166 (IVIG…AVTG), 172 to 192 (ALLL…ALAI), 224 to 244 (VLLL…WIYL), 245 to 265 (LGAL…YFTD), and 268 to 288 (VVAM…FVFL).

Belongs to the UbiA prenyltransferase family. Protoheme IX farnesyltransferase subfamily.

The protein localises to the cell inner membrane. The catalysed reaction is heme b + (2E,6E)-farnesyl diphosphate + H2O = Fe(II)-heme o + diphosphate. It functions in the pathway porphyrin-containing compound metabolism; heme O biosynthesis; heme O from protoheme: step 1/1. Functionally, converts heme B (protoheme IX) to heme O by substitution of the vinyl group on carbon 2 of heme B porphyrin ring with a hydroxyethyl farnesyl side group. The chain is Protoheme IX farnesyltransferase from Legionella pneumophila (strain Paris).